Consider the following 239-residue polypeptide: Glucosamine-6-phosphate deaminase (239 aa).

Asp-62 acts as the Proton acceptor; for enolization step in catalysis. The For ring-opening step role is filled by Asn-128. The active-site Proton acceptor; for ring-opening step is the His-130. The For ring-opening step role is filled by Glu-135.

Belongs to the glucosamine/galactosamine-6-phosphate isomerase family. NagB subfamily.

The enzyme catalyses alpha-D-glucosamine 6-phosphate + H2O = beta-D-fructose 6-phosphate + NH4(+). It participates in amino-sugar metabolism; N-acetylneuraminate degradation; D-fructose 6-phosphate from N-acetylneuraminate: step 5/5. Its function is as follows. Catalyzes the reversible isomerization-deamination of glucosamine 6-phosphate (GlcN6P) to form fructose 6-phosphate (Fru6P) and ammonium ion. This Lactobacillus acidophilus (strain ATCC 700396 / NCK56 / N2 / NCFM) protein is Glucosamine-6-phosphate deaminase.